The primary structure comprises 61 residues: Calprismin (61 aa).

In terms of processing, glycosylated. Expressed by the calcifying mantle epithelium and incorporated into the shell's calcitic prismatic layer.

In Pinna nobilis (Noble pen shell), this protein is Calprismin.